We begin with the raw amino-acid sequence, 233 residues long: Protease inhibitor Egf1.0 (233 aa).

Positions 1-28 are cleaved as a signal peptide; that stretch reads MYIDTGIMSNNIFLFAFFALVGLTRIEA. The TIL domain maps to 52 to 104; that stretch reads CRENEHYNSTRIECEEECNDRNNKLCYRFQQFCWCNEGYIRNSSHICVKLEDC. A disordered region spans residues 201–233; it reads FGKPKNSSAEKKPLETETQAQKFNGIIDQETLD.

Belongs to the polydnaviridae EGF-like motif protein family. As to quaternary structure, interacts with host PAP1 and PAP3.

Counteracts the host humoral immune response by inhibiting the processing and the amidolytic activity of host PAP3. Thereby, melanization of host hemolymph, normally producing several reactive intermediates toxic for viruses, is deregulated and proper immune response cannot occur. This is Protease inhibitor Egf1.0 (O12) from Microplitis demolitor (Parasitoid wasp).